The chain runs to 476 residues: 3-isopropylmalate dehydratase large subunit (476 aa).

C353, C413, and C416 together coordinate [4Fe-4S] cluster.

The protein belongs to the aconitase/IPM isomerase family. LeuC type 1 subfamily. As to quaternary structure, heterodimer of LeuC and LeuD. Requires [4Fe-4S] cluster as cofactor.

It carries out the reaction (2R,3S)-3-isopropylmalate = (2S)-2-isopropylmalate. Its pathway is amino-acid biosynthesis; L-leucine biosynthesis; L-leucine from 3-methyl-2-oxobutanoate: step 2/4. Catalyzes the isomerization between 2-isopropylmalate and 3-isopropylmalate, via the formation of 2-isopropylmaleate. This chain is 3-isopropylmalate dehydratase large subunit, found in Yersinia enterocolitica serotype O:8 / biotype 1B (strain NCTC 13174 / 8081).